The primary structure comprises 306 residues: Ornithine carbamoyltransferase (306 aa).

Carbamoyl phosphate is bound by residues 46–49, Q73, R97, and 124–127; these read STRT and HPTQ. Residues N156, D220, and 224–225 each bind L-ornithine; that span reads SM. Residues 260–261 and R288 contribute to the carbamoyl phosphate site; that span reads CL.

This sequence belongs to the aspartate/ornithine carbamoyltransferase superfamily. OTCase family.

It localises to the cytoplasm. The enzyme catalyses carbamoyl phosphate + L-ornithine = L-citrulline + phosphate + H(+). The protein operates within amino-acid biosynthesis; L-arginine biosynthesis; L-arginine from L-ornithine and carbamoyl phosphate: step 1/3. Reversibly catalyzes the transfer of the carbamoyl group from carbamoyl phosphate (CP) to the N(epsilon) atom of ornithine (ORN) to produce L-citrulline. In Campylobacter jejuni subsp. jejuni serotype O:23/36 (strain 81-176), this protein is Ornithine carbamoyltransferase.